We begin with the raw amino-acid sequence, 432 residues long: 23S rRNA (uracil(1939)-C(5))-methyltransferase RlmD (432 aa).

In terms of domain architecture, TRAM spans 10 to 68 (RVTTREIITVTTDGLDAFGQGVARHHGKALFIAGLLPGERAEVVLSEDKKQFARGDVKK). [4Fe-4S] cluster-binding residues include C81, C87, C90, and C162. 6 residues coordinate S-adenosyl-L-methionine: Q265, F294, N299, E315, N342, and D363. C389 acts as the Nucleophile in catalysis.

The protein belongs to the class I-like SAM-binding methyltransferase superfamily. RNA M5U methyltransferase family. RlmD subfamily.

The catalysed reaction is uridine(1939) in 23S rRNA + S-adenosyl-L-methionine = 5-methyluridine(1939) in 23S rRNA + S-adenosyl-L-homocysteine + H(+). In terms of biological role, catalyzes the formation of 5-methyl-uridine at position 1939 (m5U1939) in 23S rRNA. This is 23S rRNA (uracil(1939)-C(5))-methyltransferase RlmD from Cronobacter sakazakii (strain ATCC BAA-894) (Enterobacter sakazakii).